Here is a 159-residue protein sequence, read N- to C-terminus: MQQAPVVLSTLDKLLNWGRSNSLWPLTYGLACCAIEMMATGGSRFDFDRFGTIFRASPRQSDVMIIAGTLTKKHAEFMRRLYDQMPEPKWVISMGSCANTGGMFNTYATVQGADRVVPVDIYLPGCAPRPETLQYALMVLQDKIRRSKAIKQDAPKRLV.

[4Fe-4S] cluster is bound by residues Cys-32, Cys-33, Cys-97, and Cys-126.

The protein belongs to the complex I 20 kDa subunit family. NDH-1 is composed of 14 different subunits. Subunits NuoB, C, D, E, F, and G constitute the peripheral sector of the complex. [4Fe-4S] cluster is required as a cofactor.

Its subcellular location is the cell inner membrane. The catalysed reaction is a quinone + NADH + 5 H(+)(in) = a quinol + NAD(+) + 4 H(+)(out). Functionally, NDH-1 shuttles electrons from NADH, via FMN and iron-sulfur (Fe-S) centers, to quinones in the respiratory chain. The immediate electron acceptor for the enzyme in this species is believed to be ubiquinone. Couples the redox reaction to proton translocation (for every two electrons transferred, four hydrogen ions are translocated across the cytoplasmic membrane), and thus conserves the redox energy in a proton gradient. This is NADH-quinone oxidoreductase subunit B from Helicobacter pylori (strain HPAG1).